Here is a 226-residue protein sequence, read N- to C-terminus: Leucyl/phenylalanyl-tRNA--protein transferase (226 aa).

Belongs to the L/F-transferase family.

It is found in the cytoplasm. The enzyme catalyses N-terminal L-lysyl-[protein] + L-leucyl-tRNA(Leu) = N-terminal L-leucyl-L-lysyl-[protein] + tRNA(Leu) + H(+). It carries out the reaction N-terminal L-arginyl-[protein] + L-leucyl-tRNA(Leu) = N-terminal L-leucyl-L-arginyl-[protein] + tRNA(Leu) + H(+). It catalyses the reaction L-phenylalanyl-tRNA(Phe) + an N-terminal L-alpha-aminoacyl-[protein] = an N-terminal L-phenylalanyl-L-alpha-aminoacyl-[protein] + tRNA(Phe). Functionally, functions in the N-end rule pathway of protein degradation where it conjugates Leu, Phe and, less efficiently, Met from aminoacyl-tRNAs to the N-termini of proteins containing an N-terminal arginine or lysine. The sequence is that of Leucyl/phenylalanyl-tRNA--protein transferase from Pseudomonas entomophila (strain L48).